A 2043-amino-acid chain; its full sequence is Autophagy-related protein 2 (2043 aa).

Disordered stretches follow at residues 111–130, 288–341, 353–392, 413–458, 469–488, 493–563, 839–863, and 1370–1400; these read EKDR…SEAV, SASM…LPQS, IPYD…TDHA, SVPF…SHIY, SAFS…GAWD, AEES…PRGP, TSRA…EPVH, and YDLD…SDSP. Over residues 288-306 the composition is skewed to low complexity; the sequence is SASMPSSSASRSPVAPRSP. Over residues 308–325 the composition is skewed to polar residues; the sequence is DNETTAFNPSGLSRSVGS. A compositionally biased stretch (low complexity) spans 434–447; that stretch reads SVHSSSTNRSSGSS. Basic and acidic residues predominate over residues 448–458; sequence ARDDLAESHIY. Polar residues predominate over residues 470–479; it reads AFSQTGSQGL. The span at 517–527 shows a compositional bias: pro residues; that stretch reads PPQPDRIPSPE. Residues 528 to 546 are compositionally biased toward polar residues; that stretch reads QPSQDQKRNSPSFYAQDSS. Acidic residues predominate over residues 1370–1392; that stretch reads YDLDNDFDVPQELGDDADSDLDF.

This sequence belongs to the ATG2 family.

Its subcellular location is the preautophagosomal structure membrane. The protein resides in the endoplasmic reticulum membrane. The catalysed reaction is a 1,2-diacyl-sn-glycero-3-phosphocholine(in) = a 1,2-diacyl-sn-glycero-3-phosphocholine(out). It catalyses the reaction a 1,2-diacyl-sn-glycero-3-phospho-L-serine(in) = a 1,2-diacyl-sn-glycero-3-phospho-L-serine(out). It carries out the reaction a 1,2-diacyl-sn-glycero-3-phosphoethanolamine(in) = a 1,2-diacyl-sn-glycero-3-phosphoethanolamine(out). Lipid transfer protein required for autophagosome completion and peroxisome degradation. Tethers the edge of the isolation membrane (IM) to the endoplasmic reticulum (ER) and mediates direct lipid transfer from ER to IM for IM expansion. ATG2 binds to the ER exit site (ERES), which is the membrane source for autophagosome formation, using basic residues in its N-terminal region (NR) and to the expanding edge of the IM through its C-terminal region. The latter binding is assisted by an ATG18-PtdIns3P interaction. ATG2 then extracts phospholipids from the membrane source using its NR and transfers them to ATG9 to the IM through its predicted beta-sheet-rich structure for membrane expansion. In Chaetomium globosum (strain ATCC 6205 / CBS 148.51 / DSM 1962 / NBRC 6347 / NRRL 1970) (Soil fungus), this protein is Autophagy-related protein 2 (ATG2).